The following is a 246-amino-acid chain: Putative outer membrane protein YiaT (246 aa).

The first 21 residues, 1 to 21 (MLINRNIVALFALPFMASATA), serve as a signal peptide directing secretion.

The protein belongs to the MipA/OmpV family.

It is found in the cell outer membrane. In Escherichia coli (strain K12), this protein is Putative outer membrane protein YiaT (yiaT).